The primary structure comprises 401 residues: MNDLISYVKKTLGACECGTVHHPLTVEKIAIGDNAVEQELPAFVKSASYKKAAVIYDETTGRLAGKRIASLLEETAETVPVLLEANEAGDVTADEQTLVSALIGVPIDADVLIAAGAGTIHDIVRFCAYQRGIPFISVPTAPSVDGFTSAGAPLILKGKKQTVQTTAPIALFADLELLCQAPQNMVAAGFGDMLGKVTSLADWEISRLLAGEPYCPAASRLTREALDQCLDRKDDIAAKMRDGIEKLMESLILSGLVMLVLDHSRPASGGEHHLSHYLEMKALENNKRQVLHGAKVGCSAIMLTDIYRSLIGASLGDQHAEQAIRSVYEKLPDGKKMAEWMRRIGGPVSFKELDVEEELVREALAYAHQLRDRYTGLKIINQYGLLPGLLGKGPGVKGVKM.

Residues aspartate 57, 118-122 (GTIHD), and 140-143 (TAPS) each bind NAD(+). Aspartate 145 contacts substrate. Residue serine 149 participates in NAD(+) binding. Aspartate 192 is a binding site for substrate. Residues aspartate 192 and histidine 272 each contribute to the Ni(2+) site. Histidine 276 contacts substrate. Histidine 292 provides a ligand contact to Ni(2+).

This sequence belongs to the glycerol-1-phosphate dehydrogenase family. As to quaternary structure, homodimer. Ni(2+) serves as cofactor.

The protein localises to the cytoplasm. It carries out the reaction sn-glycerol 1-phosphate + NAD(+) = dihydroxyacetone phosphate + NADH + H(+). The enzyme catalyses sn-glycerol 1-phosphate + NADP(+) = dihydroxyacetone phosphate + NADPH + H(+). Functionally, catalyzes the NAD(P)H-dependent reduction of dihydroxyacetonephosphate (DHAP or glycerone phosphate) to glycerol 1-phosphate (G1P). The G1P thus generated is probably used for the synthesis of phosphoglycerolipids in Gram-positive bacterial species. The sequence is that of Glycerol-1-phosphate dehydrogenase [NAD(P)+] from Bacillus licheniformis (strain ATCC 14580 / DSM 13 / JCM 2505 / CCUG 7422 / NBRC 12200 / NCIMB 9375 / NCTC 10341 / NRRL NRS-1264 / Gibson 46).